Here is a 310-residue protein sequence, read N- to C-terminus: Cysteine synthase (310 aa).

An N6-(pyridoxal phosphate)lysine modification is found at lysine 46. Residues asparagine 76, 180–184 (GTGGT), and serine 268 each bind pyridoxal 5'-phosphate.

The protein belongs to the cysteine synthase/cystathionine beta-synthase family. Homodimer. Pyridoxal 5'-phosphate is required as a cofactor.

It carries out the reaction O-acetyl-L-serine + hydrogen sulfide = L-cysteine + acetate. Its pathway is amino-acid biosynthesis; L-cysteine biosynthesis; L-cysteine from L-serine: step 2/2. The chain is Cysteine synthase (cysK) from Staphylococcus aureus (strain Mu50 / ATCC 700699).